Here is an 81-residue protein sequence, read N- to C-terminus: Small ribosomal subunit protein uS15 (81 aa).

The protein belongs to the universal ribosomal protein uS15 family. Part of the 30S ribosomal subunit. Forms a bridge to the 50S subunit in the 70S ribosome, contacting the 23S rRNA.

One of the primary rRNA binding proteins, it binds directly to 16S rRNA where it helps nucleate assembly of the platform of the 30S subunit by binding and bridging several RNA helices of the 16S rRNA. Its function is as follows. Forms an intersubunit bridge (bridge B4) with the 23S rRNA of the 50S subunit in the ribosome. The polypeptide is Small ribosomal subunit protein uS15 (Mesomycoplasma hyorhinis (Mycoplasma hyorhinis)).